Reading from the N-terminus, the 153-residue chain is Large ribosomal subunit protein uL15 (153 aa).

Basic residues predominate over residues 1–40 (MTDKKRRQRGSRTHGGGTHKNRRGAGNRGGRGRAGRKKHE). The tract at residues 1–60 (MTDKKRRQRGSRTHGGGTHKNRRGAGNRGGRGRAGRKKHEQHNYEDVGKSGFKRPEKTDR) is disordered. Basic and acidic residues predominate over residues 41-60 (QHNYEDVGKSGFKRPEKTDR).

Belongs to the universal ribosomal protein uL15 family. Part of the 50S ribosomal subunit.

Its function is as follows. Binds to the 23S rRNA. This chain is Large ribosomal subunit protein uL15, found in Halobacterium salinarum (strain ATCC 29341 / DSM 671 / R1).